A 467-amino-acid chain; its full sequence is ATP synthase subunit beta (467 aa).

Gly156–Thr163 provides a ligand contact to ATP.

Belongs to the ATPase alpha/beta chains family. As to quaternary structure, F-type ATPases have 2 components, CF(1) - the catalytic core - and CF(0) - the membrane proton channel. CF(1) has five subunits: alpha(3), beta(3), gamma(1), delta(1), epsilon(1). CF(0) has three main subunits: a(1), b(2) and c(9-12). The alpha and beta chains form an alternating ring which encloses part of the gamma chain. CF(1) is attached to CF(0) by a central stalk formed by the gamma and epsilon chains, while a peripheral stalk is formed by the delta and b chains.

The protein resides in the cell membrane. The enzyme catalyses ATP + H2O + 4 H(+)(in) = ADP + phosphate + 5 H(+)(out). Its function is as follows. Produces ATP from ADP in the presence of a proton gradient across the membrane. The catalytic sites are hosted primarily by the beta subunits. This chain is ATP synthase subunit beta, found in Cytobacillus firmus (Bacillus firmus).